Consider the following 584-residue polypeptide: UvrABC system protein C (584 aa).

The 78-residue stretch at 12–89 (NKPGCYLFLN…IKKYRPKYNV (78 aa)) folds into the GIY-YIG domain. In terms of domain architecture, UVR spans 194-229 (NQVKQTLVKQMQKASDNLQFEQAKRIKDQITSLDFI).

Belongs to the UvrC family. In terms of assembly, interacts with UvrB in an incision complex.

It is found in the cytoplasm. The UvrABC repair system catalyzes the recognition and processing of DNA lesions. UvrC both incises the 5' and 3' sides of the lesion. The N-terminal half is responsible for the 3' incision and the C-terminal half is responsible for the 5' incision. This is UvrABC system protein C from Mycoplasma capricolum subsp. capricolum (strain California kid / ATCC 27343 / NCTC 10154).